A 350-amino-acid chain; its full sequence is METTIFQFQKTFFTKPPKERVFVLHGEEQYLIRTFLSKLKEKYGENYTVLWGDEISEEEFYTALSETSIFGGSKEKAVVIYNFGDFLKKLGRKKKEKERLIKVLRNVKSNYVFIVYDAKLQKQELSSEPLKSVASFGGIVVANRLSKERIKQLVLKKFKEKGINVENDALEYLLQLTGYNLMELKLEVEKLIDYASEKKILTLDEVKRVAFSVSENVNVFEFVDLLLLKDYEKALKVLDSLISFGIHPLQIMKILSSYALKLYTLKRLEEKGEDLNKAMESVGIKNNFLKMKFKSYLKANSKEDLKNLILSLQRIDAFSKLYFQDTVQLLRDFLTSRLEREVVKNTSHGG.

Belongs to the DNA polymerase HolA subunit family. Component of the DNA clamp loading complex consisting of tau(3):delta(1):delta'(1). The DNA polymerase III holoenzyme complex contains at least 10 different subunits organized into 3 functionally essential subassemblies: the Pol III core, the beta sliding clamp processivity factor and the clamp-loading complex. The Pol III core (subunits alpha, epsilon and theta) contains the polymerase and the 3'-5' exonuclease proofreading activities. The polymerase is tethered to the template via the dimeric beta sliding clamp processivity factor. The DNA clamp-loading complex assembles the beta sliding clamp onto the primed template and plays a central role in the organization and communication at the replication fork.

It catalyses the reaction DNA(n) + a 2'-deoxyribonucleoside 5'-triphosphate = DNA(n+1) + diphosphate. In terms of biological role, part of the beta sliding clamp loading complex, which hydrolyzes ATP to load the beta clamp onto primed DNA to form the DNA replication pre-initiation complex. DNA polymerase III is a complex, multichain enzyme responsible for most of the replicative synthesis in bacteria. This DNA polymerase also exhibits 3'-5' exonuclease activity. The delta subunit is the wrench that will open the beta subunit dimer. The DNA clamp loading complex (tau(3),delta,delta') is thought to load beta dimers onto DNA by binding ATP which alters the complex's conformation so it can bind beta sliding clamp dimers and open them at one interface. Primed DNA is recognized, ATP is hydrolyzed releasing the clamp loading complex and closing the beta sliding clamp ring around the primed DNA. The protein is Probable DNA polymerase III subunit delta of Aquifex aeolicus (strain VF5).